Consider the following 865-residue polypeptide: TATA box-binding protein-associated factor RNA polymerase I subunit B (865 aa).

The RRN7-type zinc-finger motif lies at M1–F33. Zn(2+)-binding residues include C9, C12, C26, and C29. Residues N35 to G99 are B-reader. The tract at residues E100–D111 is B-linker. Residues Y112 to E348 are N-terminal cyclin fold. A disordered region spans residues D233–I261. Over residues D239–D248 the composition is skewed to low complexity. Polar residues predominate over residues E252 to I261. The tract at residues V349–L496 is C-terminal cyclin fold.

The protein belongs to the RRN7/TAF1B family.

The protein localises to the nucleus. The protein resides in the nucleolus. Its function is as follows. Component of RNA polymerase I core factor complex that acts as a GTF2B/TFIIB-like factor and plays a key role in multiple steps during transcription initiation such as pre-initiation complex (PIC) assembly and postpolymerase recruitment events in polymerase I (Pol I) transcription. Binds rDNA promoters and plays a role in Pol I recruitment. The protein is TATA box-binding protein-associated factor RNA polymerase I subunit B of Caenorhabditis elegans.